The sequence spans 441 residues: Protein arginine methyltransferase NDUFAF7, mitochondrial (441 aa).

A mitochondrion-targeting transit peptide spans 1–46 (MSVLLRSGLGPLCAVARAAIPFIWRGKYFSSGNEPAENPVTPMLRH).

It belongs to the NDUFAF7 family. Interacts with NDUFS2.

The protein localises to the mitochondrion. It catalyses the reaction L-arginyl-[protein] + 2 S-adenosyl-L-methionine = N(omega),N(omega)'-dimethyl-L-arginyl-[protein] + 2 S-adenosyl-L-homocysteine + 2 H(+). Arginine methyltransferase involved in the assembly or stability of mitochondrial NADH:ubiquinone oxidoreductase complex (complex I). Acts by mediating symmetric dimethylation of 'Arg-118' of NDUFS2 after it assembles into the complex I, stabilizing the early intermediate complex. This chain is Protein arginine methyltransferase NDUFAF7, mitochondrial, found in Homo sapiens (Human).